We begin with the raw amino-acid sequence, 214 residues long: GTP-binding nuclear protein GSP1/Ran (214 aa).

Residues 4 to 168 (EVPTFKLVLV…LWLARKLAGN (165 aa)) form the Small GTPase Ran-type domain. 15 to 22 (DGGTGKTT) serves as a coordination point for GTP. The segment at 34 to 42 (KKYIATIGV) is switch-I. GTP-binding positions include glycine 65, 119–122 (NKVD), and 147–149 (SAK). Positions 65 to 81 (GQEKFGGLRDGYYINAQ) are switch-II.

The protein belongs to the small GTPase superfamily. Ran family. In terms of assembly, found in a nuclear export complex with RanGTP, exportin and pre-miRNA.

It localises to the nucleus. In terms of biological role, GTP-binding protein involved in nucleocytoplasmic transport. Required for the import of protein into the nucleus and also for RNA export. Involved in chromatin condensation and control of cell cycle. The polypeptide is GTP-binding nuclear protein GSP1/Ran (GSP1) (Candida glabrata (strain ATCC 2001 / BCRC 20586 / JCM 3761 / NBRC 0622 / NRRL Y-65 / CBS 138) (Yeast)).